A 389-amino-acid polypeptide reads, in one-letter code: BTB/POZ domain-containing protein KCTD9 (389 aa).

In terms of domain architecture, KHA spans 3-82 (RVTLFLNGSP…PQTDSKPPEG (80 aa)). The residue at position 11 (Ser11) is a Phosphoserine. Positions 89-161 (DWLTLNVGGR…LRHGQLIVND (73 aa)) constitute a BTB domain. 3 consecutive Pentapeptide repeat domains span residues 224–256 (NFSGADLSRLDLRYINFKMANLSRCNLAHANLC), 258–297 (ANLERADLSGSVLDCANLQGVKMLCSNAEGASLKLCNFED), and 338–376 (CNLRGATLAGTDLENCDLSGCDLQEANLRGSNVKGAIFE).

As to quaternary structure, forms pentamers. Component of a complex composed of 5 subunits of KCTD9 and 5 CUL3.

It participates in protein modification; protein ubiquitination. Its function is as follows. Substrate-specific adapter of a BCR (BTB-CUL3-RBX1) E3 ubiquitin-protein ligase complex, which mediates the ubiquitination of target proteins, leading to their degradation by the proteasome. This chain is BTB/POZ domain-containing protein KCTD9 (KCTD9), found in Homo sapiens (Human).